We begin with the raw amino-acid sequence, 259 residues long: Type III pantothenate kinase (259 aa).

6–13 (DVGNTNCT) serves as a coordination point for ATP. 107–110 (GSDR) lines the substrate pocket. Asp-109 serves as the catalytic Proton acceptor. Asp-129 contributes to the K(+) binding site. Thr-132 is an ATP binding site. Thr-184 serves as a coordination point for substrate.

Belongs to the type III pantothenate kinase family. As to quaternary structure, homodimer. It depends on NH4(+) as a cofactor. K(+) serves as cofactor.

Its subcellular location is the cytoplasm. It carries out the reaction (R)-pantothenate + ATP = (R)-4'-phosphopantothenate + ADP + H(+). It participates in cofactor biosynthesis; coenzyme A biosynthesis; CoA from (R)-pantothenate: step 1/5. Its function is as follows. Catalyzes the phosphorylation of pantothenate (Pan), the first step in CoA biosynthesis. The sequence is that of Type III pantothenate kinase from Listeria monocytogenes serovar 1/2a (strain ATCC BAA-679 / EGD-e).